Here is a 166-residue protein sequence, read N- to C-terminus: Cyclic pyranopterin monophosphate synthase (166 aa).

Substrate contacts are provided by residues 83-85 (LCH) and 121-122 (ME). D136 is an active-site residue.

The protein belongs to the MoaC family. In terms of assembly, homohexamer; trimer of dimers.

The catalysed reaction is (8S)-3',8-cyclo-7,8-dihydroguanosine 5'-triphosphate = cyclic pyranopterin phosphate + diphosphate. Its pathway is cofactor biosynthesis; molybdopterin biosynthesis. Functionally, catalyzes the conversion of (8S)-3',8-cyclo-7,8-dihydroguanosine 5'-triphosphate to cyclic pyranopterin monophosphate (cPMP). This is Cyclic pyranopterin monophosphate synthase from Trichodesmium erythraeum (strain IMS101).